The primary structure comprises 745 residues: Prolyl oligopeptidase ophP (745 aa).

Catalysis depends on charge relay system residues Ser580, Asp665, and His701.

Belongs to the peptidase S9A family. In terms of assembly, monomer.

It carries out the reaction Hydrolysis of Pro-|-Xaa &gt;&gt; Ala-|-Xaa in oligopeptides.. The protein operates within mycotoxin biosynthesis. Functionally, prolyl oligopeptidase; part of the gene cluster that mediates the biosynthesis of omphalotin A, a highly methylated cyclic dodecapeptide with nematodicidal activity. Excises and catalyzes the macrocyclization of the methylated core peptide of OphMA to yield omphalotin A. OphP works in a two-step fashion with an initial cleavage at the N-terminus, followed by a second cleavage at the C-terminus of the core peptide. According to this mechanism, the free N-terminus of the core peptide, generated by the first cleavage, attacks the covalent intermediate of the second cleavage, which results in macrocyclization of the core peptide. The polypeptide is Prolyl oligopeptidase ophP (Omphalotus olearius (Jack o'lantern)).